The chain runs to 340 residues: DNA-directed RNA polymerase subunit alpha (340 aa).

An alpha N-terminal domain (alpha-NTD) region spans residues 1 to 238; the sequence is MADTFVAKNW…EQLTVFVNFD (238 aa). The interval 253-340 is alpha C-terminal domain (alpha-CTD); the sequence is AKLNENLFRS…QAPAPAQPKA (88 aa).

This sequence belongs to the RNA polymerase alpha chain family. As to quaternary structure, homodimer. The RNAP catalytic core consists of 2 alpha, 1 beta, 1 beta' and 1 omega subunit. When a sigma factor is associated with the core the holoenzyme is formed, which can initiate transcription.

The catalysed reaction is RNA(n) + a ribonucleoside 5'-triphosphate = RNA(n+1) + diphosphate. In terms of biological role, DNA-dependent RNA polymerase catalyzes the transcription of DNA into RNA using the four ribonucleoside triphosphates as substrates. The sequence is that of DNA-directed RNA polymerase subunit alpha from Myxococcus xanthus (strain DK1622).